We begin with the raw amino-acid sequence, 313 residues long: Olfactory receptor 10P1 (313 aa).

Topologically, residues 1 to 25 (MAGENHTTLPEFLLLGFSDLKALQG) are extracellular. A glycan (N-linked (GlcNAc...) asparagine) is linked at Asn5. Residues 26 to 46 (PLFWVVLLVYLVTLLGNSLII) traverse the membrane as a helical segment. The Cytoplasmic segment spans residues 47–54 (LLTQVSPA). Residues 55 to 75 (LHSPMYFFLRQLSVVELFYTT) form a helical membrane-spanning segment. The Extracellular portion of the chain corresponds to 76–100 (DIVPRTLANLGSPHPQAISFQGCAA). A helical membrane pass occupies residues 101–121 (QMYVFIVLGISECCLLTAMAY). Over 122-140 (DRYVAICQPLRYSTLLSPR) the chain is Cytoplasmic. The chain crosses the membrane as a helical span at residues 141-161 (ACMAMVGTSWLTGIITATTHA). Over 162 to 198 (SLIFSLPFRSHPIIPHFLCDILPVLRLASAGKHRSEI) the chain is Extracellular. A helical transmembrane segment spans residues 199–218 (SVMTATIVFIMIPFSLIVTS). Topologically, residues 219 to 238 (YIRILGAILAMASTQSRRKV) are cytoplasmic. Residues 239 to 259 (FSTCSSHLLVVSLFFGTASIT) traverse the membrane as a helical segment. Residues 260-272 (YIRPQAGSSVTTD) are Extracellular-facing. Residues 273-293 (RVLSLFYTVITPMLNPIIYTL) traverse the membrane as a helical segment. At 294–313 (RNKDVRRALRHLVKRQRPSP) the chain is on the cytoplasmic side.

Belongs to the G-protein coupled receptor 1 family.

The protein localises to the cell membrane. In terms of biological role, odorant receptor. The chain is Olfactory receptor 10P1 (OR10P1) from Homo sapiens (Human).